The sequence spans 619 residues: Vitamin B12 transporter BtuB (619 aa).

Positions 1 to 25 are cleaved as a signal peptide; it reads MINKKRLLLSTVSIMVISGWNQASA. Residues 31–38 carry the TonB box motif; it reads DSLVVTAS. Residues 43–157 enclose the TBDR plug domain; the sequence is PISSILAPYT…IGGVINIITT (115 aa). Residues L88, S90, and 115-116 contribute to the cyanocob(III)alamin site; that span reads IS. A TBDR beta-barrel domain is found at 160 to 619; that stretch reads KLGTSLNVGI…EYYLTGSYNF (460 aa). 3 beta stranded membrane-spanning segments follow: residues 163–170, 174–183, and 189–200; these read TSLNVGIG, YQTYDGATQQ, and TVLTAAANYTYT. D204, Q216, D218, and D220 together coordinate Ca(2+). A run of 2 beta stranded transmembrane segments spans residues 222-232 and 237-253; these read FMSKMLWLGVD and EQVS…NRTS. Residues Y254 and D255 each contribute to the Ca(2+) site. A256 serves as a coordination point for cyanocob(III)alamin. Position 268 (D268) interacts with Ca(2+). Beta stranded transmembrane passes span 270-284, 286-303, 316-332, 335-344, 360-376, 378-388, 392-407, 410-424, 441-450, 456-465, 478-495, 499-514, 522-534, 540-556, 563-577, 590-601, and 607-619; these read RELY…VRFN, GIYS…KDYN, SLND…NTFQ, QGIVSTGVDF, KTVR…QQLK, FILEGAIRSDK, AGWN…WEFI, YRLI…KAPT, ESKQWEGGIE, LTWRMTVYRN, YYNI…TGLI, MFQH…PRNS, RRAK…QLDW, DWGL…DKDF, RVKL…LTVS, IANLLDKDYETV, and PGRE…SYNF. Cyanocob(III)alamin is bound at residue S316. Residue R522 participates in cyanocob(III)alamin binding. The TonB C-terminal box signature appears at 602 to 619; that stretch reads YGYRIPGREYYLTGSYNF.

Belongs to the TonB-dependent receptor family. BtuB (TC 1.B.14.3.1) subfamily.

It is found in the cell outer membrane. In terms of biological role, involved in the active translocation of vitamin B12 (cyanocobalamin) across the outer membrane to the periplasmic space. It derives its energy for transport by interacting with the trans-periplasmic membrane protein TonB. The polypeptide is Vitamin B12 transporter BtuB (Photorhabdus laumondii subsp. laumondii (strain DSM 15139 / CIP 105565 / TT01) (Photorhabdus luminescens subsp. laumondii)).